Reading from the N-terminus, the 288-residue chain is 4-hydroxybenzoate octaprenyltransferase (288 aa).

A run of 7 helical transmembrane segments spans residues 38–58, 98–120, 141–161, 163–183, 213–233, 238–258, and 268–288; these read IAAQ…GVFL, ILFA…MTIW, LLQV…FSAV, ESLP…SVIY, LIIG…GSLA, VYYI…KLMV, and AFLN…LSYL.

It belongs to the UbiA prenyltransferase family. Mg(2+) is required as a cofactor.

It localises to the cell inner membrane. It carries out the reaction all-trans-octaprenyl diphosphate + 4-hydroxybenzoate = 4-hydroxy-3-(all-trans-octaprenyl)benzoate + diphosphate. The protein operates within cofactor biosynthesis; ubiquinone biosynthesis. In terms of biological role, catalyzes the prenylation of para-hydroxybenzoate (PHB) with an all-trans polyprenyl group. Mediates the second step in the final reaction sequence of ubiquinone-8 (UQ-8) biosynthesis, which is the condensation of the polyisoprenoid side chain with PHB, generating the first membrane-bound Q intermediate 3-octaprenyl-4-hydroxybenzoate. This Providencia stuartii protein is 4-hydroxybenzoate octaprenyltransferase.